Here is a 440-residue protein sequence, read N- to C-terminus: C4-dicarboxylate transport protein (440 aa).

8 helical membrane passes run 8–28 (LYLQVLLAVVLGALVGHLFPA), 40–60 (FIKLVKMLIAPIVFATVVTGI), 74–94 (LKGLLYFEVLTTVALAIGLVV), 147–167 (GDILQVLLFSVLFGAALAALK), 187–207 (IVGFVMRLAPVGAFGAMAFTV), 221–241 (LIACFYATSALFVVLMLGLVL), 288–308 (VVGLVVPMGYSFNLDGTSIYL), and 354–374 (AATLSAVGNIPVAGLALLLGV). A disordered region spans residues 419–440 (DEVEPANDPEPPAMAAGLGLHG).

It belongs to the dicarboxylate/amino acid:cation symporter (DAACS) (TC 2.A.23) family.

It localises to the cell inner membrane. In terms of biological role, responsible for the transport of dicarboxylates such as succinate, fumarate, and malate from the periplasm across the membrane. The sequence is that of C4-dicarboxylate transport protein from Anaeromyxobacter dehalogenans (strain 2CP-C).